An 815-amino-acid chain; its full sequence is Protein SMAX1-LIKE 3 (815 aa).

A Clp R domain is found at 8–171; it reads VEQALTADAA…TKVEQAVSLE (164 aa). Repeat stretches follow at residues 12 to 80 and 99 to 171; these read LTAD…LNRL and ISNA…VSLE. The tract at residues 750–769 is disordered; it reads SRACSPPSNQKSDGSDQPED. An EAR motif is present at residues 778–782; it reads LDLNL.

This sequence belongs to the ClpA/ClpB family. As to quaternary structure, interacts probably with TPL/TPR in an EAR-motif dependent manner. In terms of tissue distribution, expressed in roots and seedlings.

In terms of biological role, may function in a transcriptional corepressor complex. This is Protein SMAX1-LIKE 3 from Arabidopsis thaliana (Mouse-ear cress).